The primary structure comprises 282 residues: Cytochrome c1 (282 aa).

The signal sequence occupies residues 1 to 24; it reads MTIKLRFVASLALVFGLAAASVPA. Heme c is bound by residues Cys62, Cys65, His66, and Met207. Residues 253–273 form a helical membrane-spanning segment; the sequence is WWVLGFLVIFTGLLVATKIVV.

As to quaternary structure, the main subunits of complex b-c1 are: cytochrome b, cytochrome c1 and the Rieske protein. Post-translationally, binds 1 heme c group covalently per subunit.

The protein resides in the cell membrane. Its function is as follows. Component of the ubiquinol-cytochrome c reductase complex (complex III or cytochrome b-c1 complex), which is a respiratory chain that generates an electrochemical potential coupled to ATP synthesis. c1 functions as an electron donor to cytochrome c. The sequence is that of Cytochrome c1 (petC) from Blastochloris viridis (Rhodopseudomonas viridis).